Here is a 308-residue protein sequence, read N- to C-terminus: Cell division protein FtsX (308 aa).

Over 1 to 24 (MISRFFRHLFEALKSLKRNGWMTV) the chain is Extracellular. A helical membrane pass occupies residues 25–45 (AAVSSVMITLTLVAIFASVIF). Residues 46-178 (NTAKLATDIE…NTERLFKLAS (133 aa)) lie on the Cytoplasmic side of the membrane. Residues 179–199 (FIRVWGLGIAALLIFIAAFLI) traverse the membrane as a helical segment. Topologically, residues 200 to 236 (SNTIRITIISRSREIQIMRLVGAKNSYIRGPFLLEGA) are extracellular. The chain crosses the membrane as a helical span at residues 237–257 (FIGLLGAIAPSVLVFIVYQIV). Topologically, residues 258 to 276 (YQSVNKSLVGQNLSMISPD) are cytoplasmic. A helical membrane pass occupies residues 277–297 (LFSPLMIALLFVIGVFIGSLG). At 298 to 308 (SGISMRRFLKI) the chain is on the extracellular side.

Belongs to the ABC-4 integral membrane protein family. FtsX subfamily. As to quaternary structure, interacts with FtsE. Interacts (via large extracellular loop) with PcsB (via N-terminal coiled coil domain). This interaction directs PcsB to equatorial and septal sites of dividing cells.

It is found in the cell membrane. In terms of biological role, part of the ABC transporter FtsEX involved in asymmetric cellular division facilitating the initiation of sporulation. Required in maintaining normal growth and cellular morphology. This is Cell division protein FtsX from Streptococcus pneumoniae (strain ATCC BAA-255 / R6).